The following is a 435-amino-acid chain: Plant UBX domain-containing protein 6 (435 aa).

Disordered regions lie at residues 1-150, 208-265, and 311-352; these read MDVN…PQKV, ENYT…EDQP, and PTTT…SMSS. A compositionally biased stretch (low complexity) spans 49 to 62; it reads TSSFSTFDGSSGYS. The segment covering 112 to 129 has biased composition (basic and acidic residues); that stretch reads AVEHYGGEENRAIERPEQ. Positions 130 to 141 are enriched in low complexity; sequence SSRSMSEETVSS. Residues 150–211 enclose the SEP 1 domain; that stretch reads VFTHTVTSWS…IISREEENYT (62 aa). Residues 211 to 222 are compositionally biased toward polar residues; sequence TESQAGSDSAST. Over residues 231 to 242 the composition is skewed to basic and acidic residues; the sequence is RAKESAIERSEQ. Positions 252 to 265 are enriched in acidic residues; that stretch reads DSAELQEQQQEDQP. Residues 268–343 form the SEP 2 domain; it reads VVTYTVTIWR…ESTSTEPPLT (76 aa). 2 stretches are compositionally biased toward low complexity: residues 312 to 323 and 333 to 349; these read TTTRSTSCSSQT and SEST…QPPS. Residues 357 to 434 form the UBX domain; it reads PAAPTTSIQL…GIANSVLVQK (78 aa).

This chain is Plant UBX domain-containing protein 6, found in Arabidopsis thaliana (Mouse-ear cress).